The following is a 100-amino-acid chain: Urease subunit gamma (100 aa).

This sequence belongs to the urease gamma subunit family. In terms of assembly, heterotrimer of UreA (gamma), UreB (beta) and UreC (alpha) subunits. Three heterotrimers associate to form the active enzyme.

Its subcellular location is the cytoplasm. The enzyme catalyses urea + 2 H2O + H(+) = hydrogencarbonate + 2 NH4(+). It functions in the pathway nitrogen metabolism; urea degradation; CO(2) and NH(3) from urea (urease route): step 1/1. The chain is Urease subunit gamma from Actinobacillus pleuropneumoniae serotype 5b (strain L20).